The primary structure comprises 210 residues: MKKEIASHLLEIGAVFLQPNDPFTWSSGMKSPIYCDNRLTLSYPKVRQTIAAGLEELIKEHFPTVEVIAGTATAGIAHAAWVSDRMDLPMCYVRSKAKGHGKGNQIEGKAEKGQKVVVVEDLISTGGSAITCVEALREAGCEVLGIVSIFTYELEAGKEKLEAANVASYSLSDYSALTEVAAEKGIIGQAETKKLQEWRKNPADEAWITA.

5-phospho-alpha-D-ribose 1-diphosphate-binding positions include R94, K98, H100, and 120–128 (EDLISTGGS). S124 serves as a coordination point for orotate.

It belongs to the purine/pyrimidine phosphoribosyltransferase family. PyrE subfamily. As to quaternary structure, homodimer. The cofactor is Mg(2+).

The enzyme catalyses orotidine 5'-phosphate + diphosphate = orotate + 5-phospho-alpha-D-ribose 1-diphosphate. It functions in the pathway pyrimidine metabolism; UMP biosynthesis via de novo pathway; UMP from orotate: step 1/2. Functionally, catalyzes the transfer of a ribosyl phosphate group from 5-phosphoribose 1-diphosphate to orotate, leading to the formation of orotidine monophosphate (OMP). The polypeptide is Orotate phosphoribosyltransferase (Bacillus anthracis (strain A0248)).